The following is a 303-amino-acid chain: 4-diphosphocytidyl-2-C-methyl-D-erythritol kinase (303 aa).

Lysine 21 is an active-site residue. 106–116 (PVAAGIGGGSA) contributes to the ATP binding site. Aspartate 148 is a catalytic residue.

It belongs to the GHMP kinase family. IspE subfamily.

It catalyses the reaction 4-CDP-2-C-methyl-D-erythritol + ATP = 4-CDP-2-C-methyl-D-erythritol 2-phosphate + ADP + H(+). The protein operates within isoprenoid biosynthesis; isopentenyl diphosphate biosynthesis via DXP pathway; isopentenyl diphosphate from 1-deoxy-D-xylulose 5-phosphate: step 3/6. In terms of biological role, catalyzes the phosphorylation of the position 2 hydroxy group of 4-diphosphocytidyl-2C-methyl-D-erythritol. The polypeptide is 4-diphosphocytidyl-2-C-methyl-D-erythritol kinase (Nitrobacter hamburgensis (strain DSM 10229 / NCIMB 13809 / X14)).